Reading from the N-terminus, the 224-residue chain is 7-cyano-7-deazaguanine synthase (224 aa).

8–18 is an ATP binding site; the sequence is VSGGADSATVL. Residues Cys-189, Cys-199, Cys-202, and Cys-205 each contribute to the Zn(2+) site.

The protein belongs to the QueC family. Zn(2+) is required as a cofactor.

The enzyme catalyses 7-carboxy-7-deazaguanine + NH4(+) + ATP = 7-cyano-7-deazaguanine + ADP + phosphate + H2O + H(+). The protein operates within purine metabolism; 7-cyano-7-deazaguanine biosynthesis. Catalyzes the ATP-dependent conversion of 7-carboxy-7-deazaguanine (CDG) to 7-cyano-7-deazaguanine (preQ(0)). The sequence is that of 7-cyano-7-deazaguanine synthase from Rickettsia felis (strain ATCC VR-1525 / URRWXCal2) (Rickettsia azadi).